We begin with the raw amino-acid sequence, 105 residues long: MKQQKQKIRIRLKGFDQGQLDRSTADIVETAKRTGARVVGPIPLPTKREVYTVLRSPHVDKKSREQFEIRTHKRLVDILDPTGKTIDALKMLALPAGVDIKIKAA.

Belongs to the universal ribosomal protein uS10 family. In terms of assembly, part of the 30S ribosomal subunit.

In terms of biological role, involved in the binding of tRNA to the ribosomes. The sequence is that of Small ribosomal subunit protein uS10 from Chlamydia pneumoniae (Chlamydophila pneumoniae).